We begin with the raw amino-acid sequence, 227 residues long: Cytochrome c oxidase subunit 2 (227 aa).

Residues 1–14 lie on the Mitochondrial intermembrane side of the membrane; sequence MAYPFQLGLQDATS. The helical transmembrane segment at 15-45 threads the bilayer; the sequence is PIMEELTNFHDHTLMIVFLISSLVLYIISSM. At 46-59 the chain is on the mitochondrial matrix side; that stretch reads LATKMTHTSTMDAQ. A helical membrane pass occupies residues 60–87; sequence SMETIWTILPAVILVLIALPSLRILYMM. Topologically, residues 88-227 are mitochondrial intermembrane; sequence DEINNPVLTV…FFENWSASMI (140 aa). The Cu cation site is built by histidine 161, cysteine 196, glutamate 198, cysteine 200, histidine 204, and methionine 207. Residue glutamate 198 participates in Mg(2+) binding.

It belongs to the cytochrome c oxidase subunit 2 family. In terms of assembly, component of the cytochrome c oxidase (complex IV, CIV), a multisubunit enzyme composed of 14 subunits. The complex is composed of a catalytic core of 3 subunits MT-CO1, MT-CO2 and MT-CO3, encoded in the mitochondrial DNA, and 11 supernumerary subunits COX4I, COX5A, COX5B, COX6A, COX6B, COX6C, COX7A, COX7B, COX7C, COX8 and NDUFA4, which are encoded in the nuclear genome. The complex exists as a monomer or a dimer and forms supercomplexes (SCs) in the inner mitochondrial membrane with NADH-ubiquinone oxidoreductase (complex I, CI) and ubiquinol-cytochrome c oxidoreductase (cytochrome b-c1 complex, complex III, CIII), resulting in different assemblies (supercomplex SCI(1)III(2)IV(1) and megacomplex MCI(2)III(2)IV(2)). Found in a complex with TMEM177, COA6, COX18, COX20, SCO1 and SCO2. Interacts with TMEM177 in a COX20-dependent manner. Interacts with COX20. Interacts with COX16. It depends on Cu cation as a cofactor.

It is found in the mitochondrion inner membrane. The enzyme catalyses 4 Fe(II)-[cytochrome c] + O2 + 8 H(+)(in) = 4 Fe(III)-[cytochrome c] + 2 H2O + 4 H(+)(out). Its function is as follows. Component of the cytochrome c oxidase, the last enzyme in the mitochondrial electron transport chain which drives oxidative phosphorylation. The respiratory chain contains 3 multisubunit complexes succinate dehydrogenase (complex II, CII), ubiquinol-cytochrome c oxidoreductase (cytochrome b-c1 complex, complex III, CIII) and cytochrome c oxidase (complex IV, CIV), that cooperate to transfer electrons derived from NADH and succinate to molecular oxygen, creating an electrochemical gradient over the inner membrane that drives transmembrane transport and the ATP synthase. Cytochrome c oxidase is the component of the respiratory chain that catalyzes the reduction of oxygen to water. Electrons originating from reduced cytochrome c in the intermembrane space (IMS) are transferred via the dinuclear copper A center (CU(A)) of subunit 2 and heme A of subunit 1 to the active site in subunit 1, a binuclear center (BNC) formed by heme A3 and copper B (CU(B)). The BNC reduces molecular oxygen to 2 water molecules using 4 electrons from cytochrome c in the IMS and 4 protons from the mitochondrial matrix. In Acomys wilsoni (Wilson's spiny mouse), this protein is Cytochrome c oxidase subunit 2 (MT-CO2).